A 146-amino-acid polypeptide reads, in one-letter code: Ankyrin repeat-containing protein P16F5.05c (146 aa).

4 ANK repeats span residues methionine 1–arginine 31, asparagine 35–isoleucine 64, serine 70–isoleucine 99, and tyrosine 103–serine 132.

It is found in the cytoplasm. The protein localises to the nucleus. The chain is Ankyrin repeat-containing protein P16F5.05c from Schizosaccharomyces pombe (strain 972 / ATCC 24843) (Fission yeast).